The sequence spans 248 residues: Triosephosphate isomerase (248 aa).

Position 9–11 (9–11 (NWK)) interacts with substrate. The active-site Electrophile is the H92. E164 (proton acceptor) is an active-site residue. Substrate is bound by residues G170, S209, and 230–231 (GG).

Belongs to the triosephosphate isomerase family. In terms of assembly, homodimer.

The protein localises to the cytoplasm. It carries out the reaction D-glyceraldehyde 3-phosphate = dihydroxyacetone phosphate. The protein operates within carbohydrate biosynthesis; gluconeogenesis. It participates in carbohydrate degradation; glycolysis; D-glyceraldehyde 3-phosphate from glycerone phosphate: step 1/1. Functionally, involved in the gluconeogenesis. Catalyzes stereospecifically the conversion of dihydroxyacetone phosphate (DHAP) to D-glyceraldehyde-3-phosphate (G3P). The sequence is that of Triosephosphate isomerase from Thiobacillus denitrificans (strain ATCC 25259 / T1).